The following is a 179-amino-acid chain: ATP synthase subunit delta (179 aa).

It belongs to the ATPase delta chain family. F-type ATPases have 2 components, F(1) - the catalytic core - and F(0) - the membrane proton channel. F(1) has five subunits: alpha(3), beta(3), gamma(1), delta(1), epsilon(1). F(0) has three main subunits: a(1), b(2) and c(10-14). The alpha and beta chains form an alternating ring which encloses part of the gamma chain. F(1) is attached to F(0) by a central stalk formed by the gamma and epsilon chains, while a peripheral stalk is formed by the delta and b chains.

It localises to the cell inner membrane. F(1)F(0) ATP synthase produces ATP from ADP in the presence of a proton or sodium gradient. F-type ATPases consist of two structural domains, F(1) containing the extramembraneous catalytic core and F(0) containing the membrane proton channel, linked together by a central stalk and a peripheral stalk. During catalysis, ATP synthesis in the catalytic domain of F(1) is coupled via a rotary mechanism of the central stalk subunits to proton translocation. Functionally, this protein is part of the stalk that links CF(0) to CF(1). It either transmits conformational changes from CF(0) to CF(1) or is implicated in proton conduction. This Anaeromyxobacter sp. (strain K) protein is ATP synthase subunit delta.